Consider the following 290-residue polypeptide: Secreted chorismate mutase (290 aa).

Positions 1–21 (MKLSVSIFVLLAVSAFGGGSA) are cleaved as a signal peptide. Residues 117 to 140 (VVLSRDTVLDKPVVGKGIFPIGRR) form a KWL1-binding extensive loop region (ELR) region. Asparagine 159 and asparagine 208 each carry an N-linked (GlcNAc...) asparagine glycan.

Homodimer. Forms a heterodimer with the host cytosolic chorismate mutase CM2. Interacts with the host kiwellin KWL1 which acts as a defense protein that protects maize from infection.

The protein resides in the secreted. It localises to the host cytoplasm. The protein localises to the host cytosol. The enzyme catalyses chorismate = prephenate. Contrary to classical chorismate mutases, CMU1 is not subject to allosteric regulation by tryptophan and tyrosine. Activity is decreased in a non-competitive and allosteric manner by the binding of the host defense kiwellin KWL1 which probably blocks substrate access to the active site of CMU1. Secreted chorismate mutase that is one component of a cocktail of effectors shaping the host metabolome and acting as virulence factors. The enzyme is taken up by plant cells, can spread to neighboring cells where it affects the biosynthesis of the plant immune signal salicylic acid by channelling chorismate into the phenylpropanoid pathway. Interferes with the activity of host cytosolic chorismate mutase CM2 through heterodimerization. The polypeptide is Secreted chorismate mutase (CMU1) (Mycosarcoma maydis (Corn smut fungus)).